Reading from the N-terminus, the 158-residue chain is Leptin-B (158 aa).

The signal sequence occupies residues M1–T19. A disulfide bridge links C114 with C158.

The protein belongs to the leptin family. In terms of tissue distribution, highly expressed in the brain and eye. Expressed at low levels in muscle and skin.

The protein resides in the secreted. In terms of biological role, may function as part of a signaling pathway that acts to regulate the size of the body fat depot. In Oryzias latipes (Japanese rice fish), this protein is Leptin-B.